The sequence spans 107 residues: Frataxin (107 aa).

The protein belongs to the frataxin family. As to quaternary structure, monomer.

The protein localises to the cytoplasm. In terms of biological role, promotes the assembly and repair of iron-sulfur clusters by delivering Fe(2+) to proteins involved in these pathways. The chain is Frataxin (YFH1) from Trachipleistophora hominis (Microsporidian parasite).